Here is a 291-residue protein sequence, read N- to C-terminus: 2-dehydro-3-deoxyphosphooctonate aldolase 2 (291 aa).

Ala-2 carries the N-acetylalanine modification.

It belongs to the KdsA family. Expressed in roots, apical meristem, emerging leaves, hydathodes of young leaves, styles of mature flowers and funicules of mature siliques.

Its subcellular location is the cytoplasm. The enzyme catalyses D-arabinose 5-phosphate + phosphoenolpyruvate + H2O = 3-deoxy-alpha-D-manno-2-octulosonate-8-phosphate + phosphate. Functionally, catalyzes the stereospecific condensation of D-arabinose 5-phosphate and phosphoenolpyruvate to form 3-deoxy-D-manno-octulosonate 8-phosphate (KDO-8-phosphate) and inorganic phosphate. Involved in the biosynthesis of 3-deoxy-D-manno-octulosonate (KDO) which is an indispensable component of rhamnogalacturonan II (RG-II), a structurally complex pectic polysaccharide of the primary cell wall. RG-II is essential for the cell wall integrity of rapidly growing tissues and pollen tube growth and elongation. This is 2-dehydro-3-deoxyphosphooctonate aldolase 2 (KDSA2) from Arabidopsis thaliana (Mouse-ear cress).